The following is a 305-amino-acid chain: Ornithine carbamoyltransferase (305 aa).

Carbamoyl phosphate-binding positions include 52-55 (STRT), Gln79, Arg103, and 130-133 (HPLQ). L-ornithine contacts are provided by residues Asn162, Asp224, and 228-229 (SM). Carbamoyl phosphate is bound by residues 264-265 (CL) and Arg292.

The protein belongs to the aspartate/ornithine carbamoyltransferase superfamily. OTCase family.

It localises to the cytoplasm. It catalyses the reaction carbamoyl phosphate + L-ornithine = L-citrulline + phosphate + H(+). Its pathway is amino-acid biosynthesis; L-arginine biosynthesis; L-arginine from L-ornithine and carbamoyl phosphate: step 1/3. In terms of biological role, reversibly catalyzes the transfer of the carbamoyl group from carbamoyl phosphate (CP) to the N(epsilon) atom of ornithine (ORN) to produce L-citrulline. The protein is Ornithine carbamoyltransferase of Pyrobaculum islandicum (strain DSM 4184 / JCM 9189 / GEO3).